The following is a 256-amino-acid chain: uncharacterized protein (256 aa).

A signal peptide spans 1–22 (MKSIKRIGLCISLLILSIFVTS). The N-palmitoyl cysteine moiety is linked to residue Cys23. The S-diacylglycerol cysteine moiety is linked to residue Cys23.

The protein belongs to the staphylococcal tandem lipoprotein family.

It localises to the cell membrane. This is an uncharacterized protein from Staphylococcus aureus (strain USA300).